Consider the following 293-residue polypeptide: Elongation factor Ts (293 aa).

The segment at 81-84 (TDFV) is involved in Mg(2+) ion dislocation from EF-Tu.

This sequence belongs to the EF-Ts family.

The protein localises to the cytoplasm. In terms of biological role, associates with the EF-Tu.GDP complex and induces the exchange of GDP to GTP. It remains bound to the aminoacyl-tRNA.EF-Tu.GTP complex up to the GTP hydrolysis stage on the ribosome. In Teredinibacter turnerae (strain ATCC 39867 / T7901), this protein is Elongation factor Ts.